Here is a 444-residue protein sequence, read N- to C-terminus: MRNIIYFILSLLFSFASYALETINIEHGRADPTPIAVNKFNADNSAADVLGHDMVKVISNDLKLSGLFRPISAASFIEEKTGIEYKPLFAAWRQINASLLVNGEVKKLESGKFKISFILWDTLLEKQLAGEILEVPENLWRRAAHKIADKIYEKITGDAGYFDTKIVYVSESNSLPKIKRIALMDYDGANNKYLTNGKSLVLTPRFARSADKIFYVSYATKRRALVYEKDLKTGKESVVGDFPGISFAPRFSPDGRKAVMSIAQNGSTHIYEIDLATKRLHKLTDGFGINTSPSYSPDGKKIVYNSDRNGVPQLYIMNSDGSDVQRISFGGGSYAAPSWSPRGDYIAFTKITRGDGGKTFNIGIMKACPQDDENSERIITSGYLVESPCWSPNGRVIMFTKGWPSRAKAPGKNKIFAIDLTGHNEREIMTPADASDPEWSGVLN.

A signal peptide spans 1-19 (MRNIIYFILSLLFSFASYA).

Belongs to the TolB family. In terms of assembly, the Tol-Pal system is composed of five core proteins: the inner membrane proteins TolA, TolQ and TolR, the periplasmic protein TolB and the outer membrane protein Pal. They form a network linking the inner and outer membranes and the peptidoglycan layer.

The protein resides in the periplasm. Its function is as follows. Part of the Tol-Pal system, which plays a role in outer membrane invagination during cell division and is important for maintaining outer membrane integrity. This is Tol-Pal system protein TolB from Rickettsia massiliae (strain Mtu5).